We begin with the raw amino-acid sequence, 343 residues long: S-adenosylmethionine:tRNA ribosyltransferase-isomerase (343 aa).

Belongs to the QueA family. As to quaternary structure, monomer.

The protein localises to the cytoplasm. It catalyses the reaction 7-aminomethyl-7-carbaguanosine(34) in tRNA + S-adenosyl-L-methionine = epoxyqueuosine(34) in tRNA + adenine + L-methionine + 2 H(+). The protein operates within tRNA modification; tRNA-queuosine biosynthesis. In terms of biological role, transfers and isomerizes the ribose moiety from AdoMet to the 7-aminomethyl group of 7-deazaguanine (preQ1-tRNA) to give epoxyqueuosine (oQ-tRNA). The sequence is that of S-adenosylmethionine:tRNA ribosyltransferase-isomerase from Borreliella burgdorferi (strain ATCC 35210 / DSM 4680 / CIP 102532 / B31) (Borrelia burgdorferi).